The primary structure comprises 283 residues: Pantothenate synthetase (283 aa).

30 to 37 (MGNLHDGH) contributes to the ATP binding site. H37 serves as the catalytic Proton donor. Residue Q61 coordinates (R)-pantoate. Residue Q61 coordinates beta-alanine. 149 to 152 (GEKD) serves as a coordination point for ATP. Q155 contributes to the (R)-pantoate binding site. 186-189 (LSSR) serves as a coordination point for ATP.

Belongs to the pantothenate synthetase family. Homodimer.

Its subcellular location is the cytoplasm. The catalysed reaction is (R)-pantoate + beta-alanine + ATP = (R)-pantothenate + AMP + diphosphate + H(+). Its pathway is cofactor biosynthesis; (R)-pantothenate biosynthesis; (R)-pantothenate from (R)-pantoate and beta-alanine: step 1/1. Catalyzes the condensation of pantoate with beta-alanine in an ATP-dependent reaction via a pantoyl-adenylate intermediate. This is Pantothenate synthetase from Shigella sonnei (strain Ss046).